We begin with the raw amino-acid sequence, 958 residues long: Atromentin synthetase greA (958 aa).

The adenylation (A) domain stretch occupies residues 60 to 465 (SIQTKTFSAF…SGRIKDTVIV (406 aa)). The Carrier domain occupies 597 to 675 (APSTETEKAL…SLANYVNALL (79 aa)). Positions 602 to 672 (TEKALAKIYA…VVSSLANYVN (71 aa)) are thiolation and peptide carrier (T) domain. At Ser634 the chain carries O-(pantetheine 4'-phosphoryl)serine. The interval 698–946 (PIFFVHPGVG…MDFDHVPQFQ (249 aa)) is thioesterase (TE) domain.

The protein belongs to the ATP-dependent AMP-binding enzyme family.

The protein operates within secondary metabolite biosynthesis. An L-tyrosine:2-oxoglutarate aminotransferase and atromentin synthetase greA catalyze consecutive steps to turn over L-tyrosine into atromentin, which represents the generic precursor molecule for the entire terphenylquinone and pulvinic acid family of pigments, which are widely distributed secondary metabolites in homobasidiomycetes. The first step catalyzed by the aminotransferase converts L-tyrosine in to 4-hydroxyphenylpyruvate (4-HPP). Adenylation of two 4-HPP monomers by the greA adenylation (A) domain, covalent tethering of the monomers as a thioester and oxoester onto the greA thiolation (T) and thioesterase (TE) domains, respectively, and symmetric C-C-bond formation between two monomers catalyzed by the greA TE domain leads to atromentin. The chain is Atromentin synthetase greA (greA) from Suillus grevillei (Larch bolete).